The primary structure comprises 579 residues: L-arabinonate dehydratase (579 aa).

[2Fe-2S] cluster is bound at residue Cys59. Residue Glu91 coordinates Mg(2+). Cys127 is a binding site for [2Fe-2S] cluster. Asp128 provides a ligand contact to Mg(2+). Cys200 lines the [2Fe-2S] cluster pocket. Glu453 is a binding site for Mg(2+).

The protein belongs to the IlvD/Edd family. Homotetramer. Requires [2Fe-2S] cluster as cofactor. Mg(2+) is required as a cofactor.

The catalysed reaction is L-arabinonate = 2-dehydro-3-deoxy-L-arabinonate + H2O. It carries out the reaction D-galactonate = 2-dehydro-3-deoxy-D-galactonate + H2O. The enzyme catalyses D-fuconate = 2-dehydro-3-deoxy-D-fuconate + H2O. It participates in carbohydrate metabolism. Functionally, catalyzes the dehydration of L-arabinonate to 2-dehydro-3-deoxy-L-arabinonate during L-arabinose degradation. Can also dehydrate D-galactonate and D-fuconate with good catalytic efficiency. Has weak activity with D-xylonate and D-gluconate. The chain is L-arabinonate dehydratase from Rhizobium leguminosarum bv. trifolii (strain WSM2304).